Consider the following 363-residue polypeptide: Carbamoyl phosphate synthase small chain (363 aa).

Positions 1-172 (MTKRILMLED…AFASPGDGKR (172 aa)) are CPSase. The L-glutamine site is built by serine 46, glycine 220, and glycine 222. One can recognise a Glutamine amidotransferase type-1 domain in the interval 172–359 (RVVLVDYGVK…MEMMNGKEEG (188 aa)). The Nucleophile role is filled by cysteine 247. L-glutamine-binding residues include leucine 248, glutamine 251, asparagine 289, glycine 291, and tyrosine 292. Active-site residues include histidine 332 and glutamate 334.

The protein belongs to the CarA family. In terms of assembly, composed of two chains; the small (or glutamine) chain promotes the hydrolysis of glutamine to ammonia, which is used by the large (or ammonia) chain to synthesize carbamoyl phosphate. Tetramer of heterodimers (alpha,beta)4.

The enzyme catalyses hydrogencarbonate + L-glutamine + 2 ATP + H2O = carbamoyl phosphate + L-glutamate + 2 ADP + phosphate + 2 H(+). The catalysed reaction is L-glutamine + H2O = L-glutamate + NH4(+). It participates in amino-acid biosynthesis; L-arginine biosynthesis; carbamoyl phosphate from bicarbonate: step 1/1. Its pathway is pyrimidine metabolism; UMP biosynthesis via de novo pathway; (S)-dihydroorotate from bicarbonate: step 1/3. Its function is as follows. Small subunit of the glutamine-dependent carbamoyl phosphate synthetase (CPSase). CPSase catalyzes the formation of carbamoyl phosphate from the ammonia moiety of glutamine, carbonate, and phosphate donated by ATP, constituting the first step of 2 biosynthetic pathways, one leading to arginine and/or urea and the other to pyrimidine nucleotides. The small subunit (glutamine amidotransferase) binds and cleaves glutamine to supply the large subunit with the substrate ammonia. The chain is Carbamoyl phosphate synthase small chain from Listeria monocytogenes serovar 1/2a (strain ATCC BAA-679 / EGD-e).